Consider the following 1807-residue polypeptide: MSSSIPSVIVCGSQTIPPSRETLDNLASYLTKSPNPELKAVREVLLALPELWAELKATEPQFQALSDEPIITFRDWFLRHDTGSEYEDNIYNLSHLKIHERLPNILLAPLTVIIHIAQYSQYLDGLGLDDSDDCHVHIRQSTSSRNTTDIGPKFQGLCIGSLSAAALDASPTRTALAQNATAAVKLALCIGAYVDSQRLADSGSSSYSEMACFISRWGADCCREMVEEMLSRYPEAYISVELDYNSITITAPSGDMPSLQEDLSREGVRVANVPVNGRYHHSNNGRSLQSLLQLCCSDPCGPFWVPWGQDRLERYLRSILTEPAGWFSDMSETINSITPSETQMPMTTLELGLVSCIPPSLAALPRHHIIRGSLSPPTQPYNYPDTSIAIIGAACKYPGANSLDELWNIFAAGQVMYGEAPPGRFGKETVAGNFLSDADQFDYGLFGISPREAMYMDPQQRIALQVAYQAVESSGYFGSPNPDGDVGCYIGVGNSDYEDNVHSNTPTAYSFTGTSRAFVSGRISHYFKWTGPSITIDTACSSSAAAIHQACSGIILGDCSVALAGGVNIMSSFPADQNIAAAGMTNSTGPCRPFGADATGYSRGEGCGLIVLKRLADALSQGDNVLGVVVATAVNQSDGSSSITVPVLRSQSDLYRRVLSRASMKASDVSYVEAHGTGTQRGDPIEYQGAREVFGSSGRYQAKSHKVYIGSVKANIGHTEAASGVAGVLKVLLMLKHGQIPPQASFTSLNPAIPPSESGQISIATQLEKWKRNFRAACVNNYGAAGNNTAIIICQHPPKTLPSSTNTAQTLTRYPFLITAQSQVSVRRYCLALAQYIETNSKPLSLAAAFSLVAQQQNRNLRHRIAFCASSLPELWRLLTFHAQAAEDTSVLLPPSPRKQVKPIVLVFGGQTGSTLQFSKAVYDSSYHLRQNMDKCDALIQEMGLPSFFPDIFSQEPIEDIVILHSCLFSVQYAYAKAWLDAGLSVHRVIGHSFGQLTAMCISGVLTLENALILVIGRANLIRDCWGEEKGSMLSVQIDRAGAEALAWSESSLGDDSIEVACYNGPNSHVLVGSELAITNVERRASTASLATKRLKTTHGFHSKLVDAIMEQYSNLAHIVSYNAPVIPIETCSETASWKIFTPQLVTEHSRRPVYFCDAVRRVERDLGPCIWLEAGSSSGAVILAKQSLTSKSNYICGLQLGSPSTNPLDSVVDTTLELWNQGSSVQCWAYNPRDLVHPSHFLGLPGYQFDTSPHWLPCATTDHNKSNDPSPVIDGLISLERLSRPEPRVSIFELDQKDWTLAHILRGREVLGGILWPLALYMGLISRAAALLTSSIPSASRLIRFAGLEIKTPLGSDLLNGLCLRLKQVEAWSWGFSLESDCARHATGTVIVDDERTSRPPDHLSSLPDFATATTVFSAPRGVAYKLLEKVAEYDTAYRGLESISMNEDTAIARVHLPPAAGNSRFVGNTITLDQFLLVAEIHALSMEDSKRSEVFACSGFGETTISANFMRATERDRGQTWQVYTRQSAKRGREFLYDTFVYEAGEGEESGSLALALTGARFIRTSTSALQQVVELANTPSRSPVTEEIAPSPNFLQFQEGSANVWSLTVNLLHELTGCALEEISPQTILADMGMDSLAIMEIEARIREVFNVDIRISPVDMGSTVEIICERITAQTSPSHGLVNVVGNSTSNTTSSSSQCTPSSSFESDSDTQATELSLSAPTMEKVARVVATHVGSGEAVLSSSRLHSLGLDSLAVLELQSDLHVNFGVRVHLMQLDCSTTIGDLHALVMRRGVRENIYNGAV.

The Starter acyltransferase (SAT) domain occupies 107 to 280; it reads LAPLTVIIHI…ANVPVNGRYH (174 aa). The 411-residue stretch at 385–795 folds into the Ketosynthase family 3 (KS3) domain; it reads DTSIAIIGAA…GNNTAIIICQ (411 aa). Active-site for beta-ketoacyl synthase activity residues include Cys540, His675, and His718. A Malonyl-CoA:ACP transacylase (MAT) domain is found at 919 to 1176; sequence SKAVYDSSYH…LGPCIWLEAG (258 aa). The N-terminal hotdog fold stretch occupies residues 1272–1398; sequence PVIDGLISLE…GTVIVDDERT (127 aa). Residues 1272-1573 form the PKS/mFAS DH domain; the sequence is PVIDGLISLE…FIRTSTSALQ (302 aa). The active-site Proton acceptor; for dehydratase activity is the His1304. Residues 1416–1573 are C-terminal hotdog fold; the sequence is TVFSAPRGVA…FIRTSTSALQ (158 aa). Residue Asp1475 is the Proton donor; for dehydratase activity of the active site. One can recognise a Carrier 1 domain in the interval 1605–1679; it reads ANVWSLTVNL…IICERITAQT (75 aa). Ser1639 is modified (O-(pantetheine 4'-phosphoryl)serine). The interval 1690 to 1720 is disordered; the sequence is GNSTSNTTSSSSQCTPSSSFESDSDTQATEL. Residues 1692–1710 show a composition bias toward low complexity; the sequence is STSNTTSSSSQCTPSSSFE. Residues 1721 to 1797 enclose the Carrier 2 domain; it reads SLSAPTMEKV…DLHALVMRRG (77 aa). Residue Ser1757 is modified to O-(pantetheine 4'-phosphoryl)serine.

The cofactor is pantetheine 4'-phosphate.

The protein operates within secondary metabolite biosynthesis; terpenoid biosynthesis. In terms of biological role, non-reducing polyketide synthase; part of the cluster A that mediates the biosynthesis of chevalone E and its oxidized derivatives that possess a unique five-membered lactone ring and can synergistically enhance the cytotoxicity of doxorubicin (DOX) in breast cancer cells. Within the pathway, cle1 takes part to the biosynthesis of the molecular scaffold via the synthesis the alpha-pyrone triacetic acid lactone (TAL) from one molecule of acetyl-CoA and two molecules of malonyl-CoA. The molecular scaffold is commonly biosynthesized by a series of enzymes including the non-reducing polyketide synthase (NR-PKS) cle1 that produces the alpha-pyrone triacetic acid lactone (TAL); The membrane-bound prenyltransferase cle5 that accepts TAL as its substrate to perform a C-3 geranylgeranylation reaction, in which the pathway-dedicated GGPS cle6 is required to provide GGPP, the other substrate of cle5; the FAD-dependent monooxygenase Cle3 that forms an (S)-epoxide ring at the terminal olefin of the geranylgeranyl group; and the terpene cyclase Cle7 that catalyzes the cyclization of the prenyl group that yields the pentacyclic pathway intermediate chevalone E. Chevalone E can derivatize into seven new oxidized analogs by the cytochrome P450 monooxygenases cle2 (acting at C-20) and cle4 (acting at C-11 and C-12). The chain is Triacetic acid lactone synthase cle1 from Aspergillus versicolor.